The primary structure comprises 181 residues: uncharacterized protein (181 aa).

An N-terminal signal peptide occupies residues 1–23 (MKKCLLFLTTIALILSLSTNAFA).

This is an uncharacterized protein from Bacillus subtilis (strain 168).